Consider the following 421-residue polypeptide: Diaminobutyrate--2-oxoglutarate transaminase (421 aa).

Lys-267 carries the N6-(pyridoxal phosphate)lysine modification.

It belongs to the class-III pyridoxal-phosphate-dependent aminotransferase family. In terms of assembly, homohexamer. Pyridoxal 5'-phosphate serves as cofactor.

It catalyses the reaction L-2,4-diaminobutanoate + 2-oxoglutarate = L-aspartate 4-semialdehyde + L-glutamate. Its pathway is amine and polyamine biosynthesis; ectoine biosynthesis; L-ectoine from L-aspartate 4-semialdehyde: step 1/3. Catalyzes reversively the conversion of L-aspartate beta-semialdehyde (ASA) to L-2,4-diaminobutyrate (DABA) by transamination with L-glutamate. Seems to use L-glutamate specifically as the amino group donor to ASA, as it is not active with L-alanine, L-glutamine, L-aspartate and L-lysine, and is only poorly active with L-homoserine. In the reverse reaction, gamma-aminobutyric acid (GABA) and L-ornithine can also be used as amino group donors to 2-oxoglutarate, but with a reduced activity compared to that with DABA. The chain is Diaminobutyrate--2-oxoglutarate transaminase (ectB) from Halomonas elongata (strain ATCC 33173 / DSM 2581 / NBRC 15536 / NCIMB 2198 / 1H9).